A 325-amino-acid polypeptide reads, in one-letter code: NADH-ubiquinone oxidoreductase chain 1 (325 aa).

A run of 8 helical transmembrane segments spans residues 5 to 25 (VPAE…FLVL), 79 to 99 (VATF…YGMV), 105 to 125 (IGLL…IIAG), 144 to 164 (MVPY…CVGS), 177 to 197 (IWSG…RLAE), 237 to 257 (ILMS…ILDL), 263 to 283 (IPGS…YIWV), and 302 to 322 (VFLP…VTFQ).

Belongs to the complex I subunit 1 family.

It is found in the mitochondrion inner membrane. It carries out the reaction a ubiquinone + NADH + 5 H(+)(in) = a ubiquinol + NAD(+) + 4 H(+)(out). Core subunit of the mitochondrial membrane respiratory chain NADH dehydrogenase (Complex I) that is believed to belong to the minimal assembly required for catalysis. Complex I functions in the transfer of electrons from NADH to the respiratory chain. The immediate electron acceptor for the enzyme is believed to be ubiquinone. The chain is NADH-ubiquinone oxidoreductase chain 1 (ND1) from Petunia hybrida (Petunia).